Reading from the N-terminus, the 263-residue chain is Tryptophan synthase alpha chain (263 aa).

Residues Glu-46 and Asp-57 each act as proton acceptor in the active site.

The protein belongs to the TrpA family. In terms of assembly, tetramer of two alpha and two beta chains.

It catalyses the reaction (1S,2R)-1-C-(indol-3-yl)glycerol 3-phosphate + L-serine = D-glyceraldehyde 3-phosphate + L-tryptophan + H2O. It functions in the pathway amino-acid biosynthesis; L-tryptophan biosynthesis; L-tryptophan from chorismate: step 5/5. Functionally, the alpha subunit is responsible for the aldol cleavage of indoleglycerol phosphate to indole and glyceraldehyde 3-phosphate. The sequence is that of Tryptophan synthase alpha chain from Bacteroides fragilis (strain ATCC 25285 / DSM 2151 / CCUG 4856 / JCM 11019 / LMG 10263 / NCTC 9343 / Onslow / VPI 2553 / EN-2).